A 772-amino-acid polypeptide reads, in one-letter code: Polyribonucleotide nucleotidyltransferase (772 aa).

Residues D486 and D492 each coordinate Mg(2+). The 60-residue stretch at 553-612 folds into the KH domain; that stretch reads PRIETLQIDKSKIRDVIGTGGKVIREIVATTGAKVDIDDEGLIKISSSDLTQIEAAKNWI. In terms of domain architecture, S1 motif spans 622 to 690; that stretch reads GKIYKGKVVN…QRGKVRLSMR (69 aa). A disordered region spans residues 695–772; sequence ETGAELEDTR…HMPAFLKSDD (78 aa). Residues 701–760 are compositionally biased toward basic and acidic residues; sequence EDTRPPREPREPRGDRGDRGDRGDRRGPRGDRGPRREGGDRGPRREGGDRPRRDRDDGPA.

The protein belongs to the polyribonucleotide nucleotidyltransferase family. Mg(2+) serves as cofactor.

Its subcellular location is the cytoplasm. It catalyses the reaction RNA(n+1) + phosphate = RNA(n) + a ribonucleoside 5'-diphosphate. Functionally, involved in mRNA degradation. Catalyzes the phosphorolysis of single-stranded polyribonucleotides processively in the 3'- to 5'-direction. The protein is Polyribonucleotide nucleotidyltransferase of Novosphingobium aromaticivorans (strain ATCC 700278 / DSM 12444 / CCUG 56034 / CIP 105152 / NBRC 16084 / F199).